The chain runs to 424 residues: UDP-N-acetylglucosamine 1-carboxyvinyltransferase (424 aa).

A phosphoenolpyruvate-binding site is contributed by 22–23 (KN). A UDP-N-acetyl-alpha-D-glucosamine-binding site is contributed by Arg93. Cys117 acts as the Proton donor in catalysis. At Cys117 the chain carries 2-(S-cysteinyl)pyruvic acid O-phosphothioketal. Residues 162 to 165 (KVSV), Asp307, and Ile329 contribute to the UDP-N-acetyl-alpha-D-glucosamine site.

This sequence belongs to the EPSP synthase family. MurA subfamily.

Its subcellular location is the cytoplasm. It carries out the reaction phosphoenolpyruvate + UDP-N-acetyl-alpha-D-glucosamine = UDP-N-acetyl-3-O-(1-carboxyvinyl)-alpha-D-glucosamine + phosphate. It participates in cell wall biogenesis; peptidoglycan biosynthesis. Cell wall formation. Adds enolpyruvyl to UDP-N-acetylglucosamine. This chain is UDP-N-acetylglucosamine 1-carboxyvinyltransferase, found in Actinobacillus pleuropneumoniae serotype 3 (strain JL03).